The primary structure comprises 174 residues: Beta-lactoglobulin (174 aa).

The N-terminal stretch at 1 to 18 (MKFLLLTVGLALIGAIQA) is a signal peptide. 2 cysteine pairs are disulfide-bonded: cysteine 79/cysteine 172 and cysteine 122/cysteine 134.

Belongs to the calycin superfamily. Lipocalin family. As to quaternary structure, monomer.

The protein resides in the secreted. Functionally, lactoglobulin is the primary component of whey, it binds retinol and is probably involved in the transport of that molecule. This chain is Beta-lactoglobulin (LGB), found in Notamacropus eugenii (Tammar wallaby).